We begin with the raw amino-acid sequence, 260 residues long: Proliferating cell nuclear antigen (260 aa).

A DNA-binding region spans residues 61–80 (RCDRNLSMGMNLGSMAKILK).

It belongs to the PCNA family. As to quaternary structure, homotrimer. Forms a complex with activator 1 heteropentamer in the presence of ATP. Interacts with E2f. Interacts with the catalytic subunits of two DNA polymerase complexes: PolD1 from the delta complex and PolE1/DNApol-epsilon255 from the epsilon complex. In terms of tissue distribution, expressed at high levels in adult ovary.

The protein resides in the nucleus. It is found in the chromosome. The protein localises to the cytoplasm. Likely to be an auxiliary protein of DNA polymerase delta complex and is probably involved in the control of DNA replication and repair by increasing the polymerase's processibility. This is Proliferating cell nuclear antigen from Drosophila melanogaster (Fruit fly).